Consider the following 232-residue polypeptide: CD302 antigen (232 aa).

Positions 1 to 22 (MPRAAPPALLLPLLGLAAAAAA) are cleaved as a signal peptide. The Extracellular portion of the chain corresponds to 23-168 (DCPSSTWVQF…YEKKYLSDNR (146 aa)). Residues 32–152 (FQDSCYIFLQ…CEVSSVEGTL (121 aa)) form the C-type lectin domain. A glycan (N-linked (GlcNAc...) asparagine) is linked at N109. C128 and C143 form a disulfide bridge. Residues 169–189 (ILISALVIASTVILTVLGAVV) traverse the membrane as a helical segment. Over 190–232 (WFLYKRSLDSGFTTVFSAAHQSPYNDDCVLVVAEENEYDIQFN) the chain is Cytoplasmic.

The protein localises to the membrane. It is found in the cell projection. The protein resides in the filopodium. It localises to the cytoplasm. Its subcellular location is the cell cortex. The protein localises to the microvillus. In terms of biological role, potential multifunctional C-type lectin receptor that may play roles in endocytosis and phagocytosis as well as in cell adhesion and migration. The sequence is that of CD302 antigen from Bos taurus (Bovine).